The following is a 392-amino-acid chain: 1-deoxy-D-xylulose 5-phosphate reductoisomerase (392 aa).

NADPH is bound by residues Thr-10, Gly-11, Ser-12, Ile-13, and Asn-124. Residue Lys-125 coordinates 1-deoxy-D-xylulose 5-phosphate. Glu-126 contributes to the NADPH binding site. Asp-150 lines the Mn(2+) pocket. 1-deoxy-D-xylulose 5-phosphate-binding residues include Ser-151, Glu-152, Ser-180, and His-203. A Mn(2+)-binding site is contributed by Glu-152. Gly-209 is an NADPH binding site. 1-deoxy-D-xylulose 5-phosphate-binding residues include Ser-216, Asn-221, Lys-222, and Glu-225. Glu-225 contacts Mn(2+).

This sequence belongs to the DXR family. The cofactor is Mg(2+). Mn(2+) is required as a cofactor.

It carries out the reaction 2-C-methyl-D-erythritol 4-phosphate + NADP(+) = 1-deoxy-D-xylulose 5-phosphate + NADPH + H(+). Its pathway is isoprenoid biosynthesis; isopentenyl diphosphate biosynthesis via DXP pathway; isopentenyl diphosphate from 1-deoxy-D-xylulose 5-phosphate: step 1/6. In terms of biological role, catalyzes the NADPH-dependent rearrangement and reduction of 1-deoxy-D-xylulose-5-phosphate (DXP) to 2-C-methyl-D-erythritol 4-phosphate (MEP). This is 1-deoxy-D-xylulose 5-phosphate reductoisomerase from Saccharophagus degradans (strain 2-40 / ATCC 43961 / DSM 17024).